The primary structure comprises 188 residues: Peptidyl-prolyl cis-trans isomerase (188 aa).

A signal peptide spans M1–A20. Positions N21–I181 constitute a PPIase cyclophilin-type domain.

The protein belongs to the cyclophilin-type PPIase family.

The protein localises to the periplasm. The enzyme catalyses [protein]-peptidylproline (omega=180) = [protein]-peptidylproline (omega=0). Its function is as follows. PPIases accelerate the folding of proteins. It catalyzes the cis-trans isomerization of proline imidic peptide bonds in oligopeptides. This protein is not essential for growth. Presumably plays a role in signal transduction. The polypeptide is Peptidyl-prolyl cis-trans isomerase (rotA) (Acinetobacter baylyi (strain ATCC 33305 / BD413 / ADP1)).